A 1019-amino-acid polypeptide reads, in one-letter code: Collagen alpha-2(VI) chain (1019 aa).

Positions Met-1–Ala-20 are cleaved as a signal peptide. The interval Gln-21 to Gly-256 is nonhelical region. The VWFA 1 domain occupies His-46 to Ile-234. Asn-140 carries an N-linked (GlcNAc...) asparagine glycan. Residues Pro-257–Gly-588 form a disordered region. A triple-helical region region spans residues Pro-257–Thr-590. Residues Asp-287 to Phe-305 are compositionally biased toward low complexity. Basic and acidic residues predominate over residues Lys-306–Lys-318. Asn-327 is a glycosylation site (N-linked (GlcNAc...) asparagine). Composition is skewed to basic and acidic residues over residues Glu-365–Arg-377 and Pro-419–Pro-429. 5 consecutive short sequence motifs (cell attachment site) follow at residues Arg-366–Asp-368, Arg-426–Asp-428, Arg-489–Asp-491, Arg-498–Asp-500, and Arg-539–Asp-541. Over residues Pro-524–Pro-557 the composition is skewed to basic and acidic residues. Residues Asp-559–Arg-569 are compositionally biased toward pro residues. The interval Glu-591–Cys-1019 is nonhelical region. 2 VWFA domains span residues Asp-615–Leu-805 and Asp-833–Phe-1014. The N-linked (GlcNAc...) asparagine glycan is linked to Asn-630. Residue Thr-701 is modified to Phosphothreonine. Ser-705 carries the phosphoserine modification. 3 N-linked (GlcNAc...) asparagine glycosylation sites follow: Asn-785, Asn-897, and Asn-954.

It belongs to the type VI collagen family. Trimers composed of three different chains: alpha-1(VI), alpha-2(VI), and alpha-3(VI) or alpha-5(VI) or alpha-6(VI). Interacts with CSPG4. Post-translationally, prolines at the third position of the tripeptide repeating unit (G-X-Y) are hydroxylated in some or all of the chains.

The protein localises to the secreted. Its subcellular location is the extracellular space. The protein resides in the extracellular matrix. It localises to the membrane. Its function is as follows. Collagen VI acts as a cell-binding protein. The protein is Collagen alpha-2(VI) chain (COL6A2) of Homo sapiens (Human).